The chain runs to 119 residues: Ergochrome gene cluster protein CPUR_05426 (119 aa).

It participates in pigment biosynthesis. In terms of biological role, part of the ergochrome gene cluster responsible for the typical purple-black color of the ergot sclerotia. The ergochrome gene cluster produces several ergot pigments including the yellow ergochrome secalonic acid and its derivatives, as well as the red anthraquinones endocrocin and clavorubin. The pathway begins with the synthesis of atrochrysone thioester by the polyketide synthase (PKS) CPUR_05437. The atrochrysone carboxyl ACP thioesterase CPUR_05436 then breaks the thioester bond and releases the atrochrysone carboxylic acid from CPUR_05437. The atrochrysone carboxylic acid is then converted to atrochrysone which is further transformed into emodin anthrone. The next step is performed by the anthrone oxygenase CPUR_05434 that catalyzes the oxidation of emodinanthrone to emodin. Emodin is further modified to yield monodictyphenone via several steps involving CPUR_05427, CPUR_05428, CPUR_05429 and CPUR_05430. The short chain dehydrogenase/reductase CPUR_05418 then catalyzes the C-5 ketoreduction to give the xanthone skeleton of the monomeric units. Ergochromes formation requires further dimerization steps of different xanthone units, probably catalyzed by the cytochrome P450 monooxygenase CPUR_05419. CPUR_05425, CPUR_05426 and CPUR_05431 are unique to Claviceps, thus it is likely that they are involved in further modification of xanthone units or in their dimerization. The yellow ergochromes and the red anthraquinone pigments endocrocin and clavorubin are products from the same PKS derived precursors and the latter are likely shunt products in the pathway of xanthone biosynthesis. It is proposed that atrochrysone carboxylic acid released from the PKS CPUR_05437 can also be converted to endocrocin anthrone which is further oxidized into endocrocin by CPUR_05435. Endocrocin could be then modified to clavorubin, possibly by CPUR_05423 and CPUR_05431. Clavorubin is the principal anthraquinone metabolite produced by the cluster with a much higher yield compared to endocrocin. This is Ergochrome gene cluster protein CPUR_05426 from Claviceps purpurea (strain 20.1) (Ergot fungus).